A 351-amino-acid chain; its full sequence is Riboflavin-binding protein RibY (351 aa).

The first 19 residues, 1–19 (MMKLRVLTLGILIILLITA), serve as a signal peptide directing secretion. Cys-20 is lipidated: N-palmitoyl cysteine. Cys-20 carries S-diacylglycerol cysteine lipidation.

It belongs to the NMT1 family. As to quaternary structure, the complex is likely composed of an ATP-binding protein, a transmembrane protein (RibX) and a solute-binding protein (RibY).

Its subcellular location is the cell membrane. Functionally, part of an ABC transporter complex that transports riboflavin into the cell. Binds riboflavin. The protein is Riboflavin-binding protein RibY of Chloroflexus aurantiacus (strain ATCC 29366 / DSM 635 / J-10-fl).